A 150-amino-acid chain; its full sequence is MFEEMILEKVRKEAERIAEEQGLEIFDVQYRRESRGWVLRIIIDNPVGYVSVRDCELFSREIERFLDREDLIEHSYTLEVSSPGLDRPLRGPKDYVRFTGKLAKIVTKDGKTFIGRIESFVDGTITISDEKRKYEINIDDVKRANLEVEF.

This sequence belongs to the RimP family.

It localises to the cytoplasm. Functionally, required for maturation of 30S ribosomal subunits. This is Ribosome maturation factor RimP from Thermotoga petrophila (strain ATCC BAA-488 / DSM 13995 / JCM 10881 / RKU-1).